The sequence spans 228 residues: Flavin-dependent thymidylate synthase (228 aa).

Residues 1–217 enclose the ThyX domain; the sequence is MEYKILDKGF…PWTFEAFLKF (217 aa). FAD contacts are provided by residues Thr55, 78-80, and Glu86; that span reads RHR. Residues 75–78, 86–90, and Arg156 contribute to the dUMP site; these read QWFR and EASLR. The ThyX motif motif lies at 78-88; that stretch reads RHRIGSFNEAS. FAD contacts are provided by residues 172–174 and Asn178; that span reads NAR. Arg183 lines the dUMP pocket. Arg183 (involved in ionization of N3 of dUMP, leading to its activation) is an active-site residue.

It belongs to the thymidylate synthase ThyX family. Homotetramer. FAD serves as cofactor.

The catalysed reaction is dUMP + (6R)-5,10-methylene-5,6,7,8-tetrahydrofolate + NADPH + H(+) = dTMP + (6S)-5,6,7,8-tetrahydrofolate + NADP(+). The protein operates within pyrimidine metabolism; dTTP biosynthesis. Its function is as follows. Catalyzes the reductive methylation of 2'-deoxyuridine-5'-monophosphate (dUMP) to 2'-deoxythymidine-5'-monophosphate (dTMP) while utilizing 5,10-methylenetetrahydrofolate (mTHF) as the methyl donor, and NADPH and FADH(2) as the reductant. The sequence is that of Flavin-dependent thymidylate synthase from Thermosipho africanus (strain TCF52B).